Here is a 133-residue protein sequence, read N- to C-terminus: Large ribosomal subunit protein uL16c (133 aa).

Belongs to the universal ribosomal protein uL16 family. Part of the 50S ribosomal subunit.

It is found in the plastid. The protein is Large ribosomal subunit protein uL16c of Euglena longa (Euglenophycean alga).